The chain runs to 125 residues: Cu-Zn superoxide dismutase-like protein OPG175 (125 aa).

The cysteines at positions 52 and 102 are disulfide-linked.

This sequence belongs to the Cu-Zn superoxide dismutase family.

The protein resides in the virion. The protein localises to the host cytoplasm. In terms of biological role, superoxide dismutase-like protein with no enzymatic activity. In Homo sapiens (Human), this protein is Cu-Zn superoxide dismutase-like protein OPG175 (OPG175).